A 334-amino-acid chain; its full sequence is Protein-methionine-sulfoxide reductase catalytic subunit MsrP (334 aa).

The tat-type signal signal peptide spans 1–44; sequence MKKIRPLTEADVTAESAFFMQRRQVLKALGISAAALSLPSTAQA. Mo-molybdopterin-binding positions include Asn88, 91–92, Cys146, Thr181, Asn233, Arg238, and 249–251; these read YE and GIK.

This sequence belongs to the MsrP family. Heterodimer of a catalytic subunit (MsrP) and a heme-binding subunit (MsrQ). The cofactor is Mo-molybdopterin. In terms of processing, predicted to be exported by the Tat system. The position of the signal peptide cleavage has not been experimentally proven.

The protein localises to the periplasm. The catalysed reaction is L-methionyl-[protein] + a quinone + H2O = L-methionyl-(S)-S-oxide-[protein] + a quinol. It carries out the reaction L-methionyl-[protein] + a quinone + H2O = L-methionyl-(R)-S-oxide-[protein] + a quinol. Part of the MsrPQ system that repairs oxidized periplasmic proteins containing methionine sulfoxide residues (Met-O), using respiratory chain electrons. Thus protects these proteins from oxidative-stress damage caused by reactive species of oxygen and chlorine generated by the host defense mechanisms. MsrPQ is essential for the maintenance of envelope integrity under bleach stress, rescuing a wide series of structurally unrelated periplasmic proteins from methionine oxidation, including the primary periplasmic chaperone SurA and the lipoprotein Pal. The catalytic subunit MsrP is non-stereospecific, being able to reduce both (R-) and (S-) diastereoisomers of methionine sulfoxide. In Salmonella agona (strain SL483), this protein is Protein-methionine-sulfoxide reductase catalytic subunit MsrP.